The sequence spans 59 residues: Large ribosomal subunit protein uL30 (59 aa).

Belongs to the universal ribosomal protein uL30 family. As to quaternary structure, part of the 50S ribosomal subunit.

This chain is Large ribosomal subunit protein uL30, found in Mycobacterium sp. (strain JLS).